Consider the following 366-residue polypeptide: Aliphatic nitrilase (366 aa).

The CN hydrolase domain maps to 8–282 (FKVAAVQAQP…EGILYADIDL (275 aa)). The active-site Proton acceptor is Glu-48. Lys-131 serves as the catalytic Proton donor. Residue Cys-165 is the Nucleophile of the active site. The segment at 346–366 (DEQRALPSTHSDETDRATASI) is disordered. The segment covering 355–366 (HSDETDRATASI) has biased composition (basic and acidic residues).

The protein belongs to the carbon-nitrogen hydrolase superfamily. Nitrilase family. As to quaternary structure, homodimer.

It carries out the reaction an aliphatic nitrile + 2 H2O = a carboxylate + NH4(+). The sequence is that of Aliphatic nitrilase (nitA) from Rhodococcus rhodochrous.